Here is a 209-residue protein sequence, read N- to C-terminus: UPF0319 protein VF_1616 (209 aa).

The N-terminal stretch at 1-21 (MKIQSIFAASFCLLSSISAHA) is a signal peptide.

This sequence belongs to the UPF0319 family.

In Aliivibrio fischeri (strain ATCC 700601 / ES114) (Vibrio fischeri), this protein is UPF0319 protein VF_1616.